Reading from the N-terminus, the 198-residue chain is Segregation and condensation protein B (198 aa).

This sequence belongs to the ScpB family. In terms of assembly, homodimer. Homodimerization may be required to stabilize the binding of ScpA to the Smc head domains. Component of a cohesin-like complex composed of ScpA, ScpB and the Smc homodimer, in which ScpA and ScpB bind to the head domain of Smc. The presence of the three proteins is required for the association of the complex with DNA.

The protein resides in the cytoplasm. In terms of biological role, participates in chromosomal partition during cell division. May act via the formation of a condensin-like complex containing Smc and ScpA that pull DNA away from mid-cell into both cell halves. The protein is Segregation and condensation protein B of Acetivibrio thermocellus (strain ATCC 27405 / DSM 1237 / JCM 9322 / NBRC 103400 / NCIMB 10682 / NRRL B-4536 / VPI 7372) (Clostridium thermocellum).